A 179-amino-acid chain; its full sequence is Large ribosomal subunit protein uL5 (179 aa).

This sequence belongs to the universal ribosomal protein uL5 family. As to quaternary structure, part of the 50S ribosomal subunit; part of the 5S rRNA/L5/L18/L25 subcomplex. Contacts the 5S rRNA and the P site tRNA. Forms a bridge to the 30S subunit in the 70S ribosome.

Its function is as follows. This is one of the proteins that bind and probably mediate the attachment of the 5S RNA into the large ribosomal subunit, where it forms part of the central protuberance. In the 70S ribosome it contacts protein S13 of the 30S subunit (bridge B1b), connecting the 2 subunits; this bridge is implicated in subunit movement. Contacts the P site tRNA; the 5S rRNA and some of its associated proteins might help stabilize positioning of ribosome-bound tRNAs. This Methylococcus capsulatus (strain ATCC 33009 / NCIMB 11132 / Bath) protein is Large ribosomal subunit protein uL5.